A 1219-amino-acid polypeptide reads, in one-letter code: Type IV pilus biogenesis factor PilY1 homolog PD_0502 (1219 aa).

Positions 1-35 (MVGMSRIILNNLFFFRCVVAVFSAHSLVISGAVHA) are cleaved as a signal peptide. A disordered region spans residues 212-234 (GLSTDPLNTEGQPYDPSRHPLNS). The Ca(2+) site is built by glutamine 958, asparagine 960, isoleucine 962, and aspartate 964.

This sequence belongs to the PilY1 family.

It is found in the fimbrium. One of the three PilY1 homologs of X.fastidiosa, which are involved in bacterial twitching motility as component of the filamentous type IV pili (T4P). This Xylella fastidiosa (strain Temecula1 / ATCC 700964) protein is Type IV pilus biogenesis factor PilY1 homolog PD_0502.